We begin with the raw amino-acid sequence, 294 residues long: tRNA dimethylallyltransferase (294 aa).

Residue 11-18 participates in ATP binding; sequence GPTAVGKT. 13 to 18 provides a ligand contact to substrate; the sequence is TAVGKT. The segment at 36-39 is interaction with substrate tRNA; it reads DSQQ.

It belongs to the IPP transferase family. Monomer. The cofactor is Mg(2+).

It catalyses the reaction adenosine(37) in tRNA + dimethylallyl diphosphate = N(6)-dimethylallyladenosine(37) in tRNA + diphosphate. Its function is as follows. Catalyzes the transfer of a dimethylallyl group onto the adenine at position 37 in tRNAs that read codons beginning with uridine, leading to the formation of N6-(dimethylallyl)adenosine (i(6)A). This chain is tRNA dimethylallyltransferase, found in Lactococcus lactis subsp. lactis (strain IL1403) (Streptococcus lactis).